Here is a 617-residue protein sequence, read N- to C-terminus: Elongation factor 4 (617 aa).

The 182-residue stretch at 17–198 folds into the tr-type G domain; the sequence is AIIRNFCIIA…KIVRDLPAPV (182 aa). GTP contacts are provided by residues 29–34 and 145–148; these read DHGKST and NKID.

This sequence belongs to the TRAFAC class translation factor GTPase superfamily. Classic translation factor GTPase family. LepA subfamily.

Its subcellular location is the cell membrane. The enzyme catalyses GTP + H2O = GDP + phosphate + H(+). Required for accurate and efficient protein synthesis under certain stress conditions. May act as a fidelity factor of the translation reaction, by catalyzing a one-codon backward translocation of tRNAs on improperly translocated ribosomes. Back-translocation proceeds from a post-translocation (POST) complex to a pre-translocation (PRE) complex, thus giving elongation factor G a second chance to translocate the tRNAs correctly. Binds to ribosomes in a GTP-dependent manner. This is Elongation factor 4 from Paenarthrobacter aurescens (strain TC1).